The chain runs to 399 residues: MIIRPVDEVRGELNAPPSKSYTHRAYFLALLAEGESTIENPLVCDDTLATIEAIRSFGAGVDGKTVVPPEEPSPGFVYARESGTTARFSTALAGGIGGKTLIDGARRLRERPMDGLVKALKGLGAEVDGFSLPLTVKGPVKSGRVSVDASKSSQFVSGLLLLGAEVGLKVEARNPVSKPYIEMTLRTMEAFGVEFEREGFSFEVYPGVKGTRYKVPGDYSTASFFLAAGALYGKVRVNNLLREDVQADMAFLDALEEFGARVKRGRDYVKVEGGELKAVALDCSDFPDSFPILAVVAAYAEGRSVIRARQLRFKESDRVRAMAVNLSRMGVKVRELEDGLEIEGGRPRGAKVETFNDHRIAMAMSIAALGATGPSIIEDTESVSKSHPGFFDDLRRLLE.

3-phosphoshikimate is bound by residues Lys19, Ser20, and Arg24. A phosphoenolpyruvate-binding site is contributed by Lys19. The phosphoenolpyruvate site is built by Gly83 and Arg111. 3-phosphoshikimate is bound by residues Ser152, Ser153, Gln154, Asp288, Gln310, and Lys314. Gln154 lines the phosphoenolpyruvate pocket. Residue Asp288 is the Proton acceptor of the active site. Arg318, Arg359, and Lys385 together coordinate phosphoenolpyruvate.

It belongs to the EPSP synthase family. In terms of assembly, monomer.

It is found in the cytoplasm. The catalysed reaction is 3-phosphoshikimate + phosphoenolpyruvate = 5-O-(1-carboxyvinyl)-3-phosphoshikimate + phosphate. The protein operates within metabolic intermediate biosynthesis; chorismate biosynthesis. In terms of biological role, catalyzes the transfer of the enolpyruvyl moiety of phosphoenolpyruvate (PEP) to the 5-hydroxyl of shikimate-3-phosphate (S3P) to produce enolpyruvyl shikimate-3-phosphate and inorganic phosphate. This chain is 3-phosphoshikimate 1-carboxyvinyltransferase, found in Thermococcus kodakarensis (strain ATCC BAA-918 / JCM 12380 / KOD1) (Pyrococcus kodakaraensis (strain KOD1)).